The sequence spans 191 residues: Thymidylate kinase (191 aa).

ATP is bound at residue 7 to 14 (GVDGAGKS).

It belongs to the thymidylate kinase family.

It catalyses the reaction dTMP + ATP = dTDP + ADP. Phosphorylation of dTMP to form dTDP in both de novo and salvage pathways of dTTP synthesis. This is Thymidylate kinase (tmk) from Helicobacter pylori (strain ATCC 700392 / 26695) (Campylobacter pylori).